The chain runs to 297 residues: Lipoyl synthase (297 aa).

[4Fe-4S] cluster contacts are provided by Cys37, Cys42, Cys48, Cys63, Cys67, Cys70, and Ser276. The Radical SAM core domain maps to 49–265; it reads WSRKHATVMI…ERIAKTKGFL (217 aa).

The protein belongs to the radical SAM superfamily. Lipoyl synthase family. [4Fe-4S] cluster is required as a cofactor.

Its subcellular location is the cytoplasm. It catalyses the reaction [[Fe-S] cluster scaffold protein carrying a second [4Fe-4S](2+) cluster] + N(6)-octanoyl-L-lysyl-[protein] + 2 oxidized [2Fe-2S]-[ferredoxin] + 2 S-adenosyl-L-methionine + 4 H(+) = [[Fe-S] cluster scaffold protein] + N(6)-[(R)-dihydrolipoyl]-L-lysyl-[protein] + 4 Fe(3+) + 2 hydrogen sulfide + 2 5'-deoxyadenosine + 2 L-methionine + 2 reduced [2Fe-2S]-[ferredoxin]. It functions in the pathway protein modification; protein lipoylation via endogenous pathway; protein N(6)-(lipoyl)lysine from octanoyl-[acyl-carrier-protein]: step 2/2. In terms of biological role, catalyzes the radical-mediated insertion of two sulfur atoms into the C-6 and C-8 positions of the octanoyl moiety bound to the lipoyl domains of lipoate-dependent enzymes, thereby converting the octanoylated domains into lipoylated derivatives. The sequence is that of Lipoyl synthase from Rickettsia prowazekii (strain Madrid E).